The chain runs to 355 residues: UDP-N-acetylglucosamine--N-acetylmuramyl-(pentapeptide) pyrophosphoryl-undecaprenol N-acetylglucosamine transferase (355 aa).

Residues T13–G15, N125, R162, S190, I244, and Q289 each bind UDP-N-acetyl-alpha-D-glucosamine.

This sequence belongs to the glycosyltransferase 28 family. MurG subfamily.

It localises to the cell inner membrane. The catalysed reaction is di-trans,octa-cis-undecaprenyl diphospho-N-acetyl-alpha-D-muramoyl-L-alanyl-D-glutamyl-meso-2,6-diaminopimeloyl-D-alanyl-D-alanine + UDP-N-acetyl-alpha-D-glucosamine = di-trans,octa-cis-undecaprenyl diphospho-[N-acetyl-alpha-D-glucosaminyl-(1-&gt;4)]-N-acetyl-alpha-D-muramoyl-L-alanyl-D-glutamyl-meso-2,6-diaminopimeloyl-D-alanyl-D-alanine + UDP + H(+). Its pathway is cell wall biogenesis; peptidoglycan biosynthesis. Cell wall formation. Catalyzes the transfer of a GlcNAc subunit on undecaprenyl-pyrophosphoryl-MurNAc-pentapeptide (lipid intermediate I) to form undecaprenyl-pyrophosphoryl-MurNAc-(pentapeptide)GlcNAc (lipid intermediate II). In Neisseria meningitidis serogroup C / serotype 2a (strain ATCC 700532 / DSM 15464 / FAM18), this protein is UDP-N-acetylglucosamine--N-acetylmuramyl-(pentapeptide) pyrophosphoryl-undecaprenol N-acetylglucosamine transferase.